The chain runs to 101 residues: Small ribosomal subunit protein uS17 (101 aa).

The protein belongs to the universal ribosomal protein uS17 family. Part of the 30S ribosomal subunit.

Its function is as follows. One of the primary rRNA binding proteins, it binds specifically to the 5'-end of 16S ribosomal RNA. In Leifsonia xyli subsp. xyli (strain CTCB07), this protein is Small ribosomal subunit protein uS17.